The primary structure comprises 559 residues: 2,3-bisphosphoglycerate-independent phosphoglycerate mutase (559 aa).

Mn(2+) is bound by residues Asp28 and Ser81. Ser81 (phosphoserine intermediate) is an active-site residue. Substrate contacts are provided by residues His140, 170–171 (RD), Arg206, Arg213, 286–289 (RADR), and Lys361. Residues Asp430, His434, Asp471, His472, and His501 each contribute to the Mn(2+) site.

This sequence belongs to the BPG-independent phosphoglycerate mutase family. Monomer. It depends on Mn(2+) as a cofactor. As to expression, found ubiquitously in germinating seed.

The protein localises to the cytoplasm. It carries out the reaction (2R)-2-phosphoglycerate = (2R)-3-phosphoglycerate. It participates in carbohydrate degradation; glycolysis; pyruvate from D-glyceraldehyde 3-phosphate: step 3/5. Functionally, catalyzes the interconversion of 2-phosphoglycerate and 3-phosphoglycerate. This Nicotiana tabacum (Common tobacco) protein is 2,3-bisphosphoglycerate-independent phosphoglycerate mutase.